The chain runs to 86 residues: Centromere protein W (86 aa).

This sequence belongs to the CENP-W/WIP1 family. As to quaternary structure, heterodimer with CENPT; this dimer coassembles with CENPS-CENPX heterodimers at centromeres to form the tetrameric CENP-T-W-S-X complex, which is a subcomplex of the large constitutive centromere-associated network (CCAN, also known as the interphase centromere complex or ICEN). Interacts with NPM1.

The protein localises to the nucleus. It localises to the chromosome. It is found in the centromere. Its subcellular location is the kinetochore. The protein resides in the nucleus matrix. The protein localises to the nucleolus. Functionally, component of the CENPA-NAC (nucleosome-associated) complex, a complex that plays a central role in assembly of kinetochore proteins, mitotic progression and chromosome segregation. The CENPA-NAC complex recruits the CENPA-CAD (nucleosome distal) complex and may be involved in incorporation of newly synthesized CENPA into centromeres. Part of a nucleosome-associated complex that binds specifically to histone H3-containing nucleosomes at the centromere, as opposed to nucleosomes containing CENPA. Component of the heterotetrameric CENP-T-W-S-X complex that binds and supercoils DNA, and plays an important role in kinetochore assembly. CENPW has a fundamental role in kinetochore assembly and function. It is one of the inner kinetochore proteins, with most further proteins binding downstream. Required for normal chromosome organization and normal progress through mitosis. This chain is Centromere protein W (Cenpw), found in Mus musculus (Mouse).